We begin with the raw amino-acid sequence, 280 residues long: Ribosomal RNA small subunit methyltransferase A (280 aa).

Asn-28, Leu-30, Gly-55, Glu-77, Asp-103, and Asn-122 together coordinate S-adenosyl-L-methionine.

The protein belongs to the class I-like SAM-binding methyltransferase superfamily. rRNA adenine N(6)-methyltransferase family. RsmA subfamily.

The protein resides in the cytoplasm. It carries out the reaction adenosine(1518)/adenosine(1519) in 16S rRNA + 4 S-adenosyl-L-methionine = N(6)-dimethyladenosine(1518)/N(6)-dimethyladenosine(1519) in 16S rRNA + 4 S-adenosyl-L-homocysteine + 4 H(+). Its function is as follows. Specifically dimethylates two adjacent adenosines (A1518 and A1519) in the loop of a conserved hairpin near the 3'-end of 16S rRNA in the 30S particle. May play a critical role in biogenesis of 30S subunits. The chain is Ribosomal RNA small subunit methyltransferase A from Dinoroseobacter shibae (strain DSM 16493 / NCIMB 14021 / DFL 12).